The primary structure comprises 355 residues: tRNA-specific 2-thiouridylase MnmA (355 aa).

ATP-binding positions include 6 to 13 and Met-32; that span reads AMSGGVDS. Cys-93 acts as the Nucleophile in catalysis. Cysteines 93 and 191 form a disulfide. Position 117 (Gly-117) interacts with ATP. Positions 140-142 are interaction with tRNA; that stretch reads KDQ. Cys-191 functions as the Cysteine persulfide intermediate in the catalytic mechanism. The interaction with tRNA stretch occupies residues 296 to 297; sequence RY.

This sequence belongs to the MnmA/TRMU family.

Its subcellular location is the cytoplasm. The enzyme catalyses S-sulfanyl-L-cysteinyl-[protein] + uridine(34) in tRNA + AH2 + ATP = 2-thiouridine(34) in tRNA + L-cysteinyl-[protein] + A + AMP + diphosphate + H(+). Its function is as follows. Catalyzes the 2-thiolation of uridine at the wobble position (U34) of tRNA, leading to the formation of s(2)U34. This chain is tRNA-specific 2-thiouridylase MnmA, found in Pelobacter propionicus (strain DSM 2379 / NBRC 103807 / OttBd1).